Reading from the N-terminus, the 160-residue chain is Major pollen allergen Bet v 1-F/I (160 aa).

Positions 55, 82, 84, and 101 each coordinate brassinolide.

The protein belongs to the BetVI family.

The protein localises to the cytoplasm. Its function is as follows. May be a general steroid carrier protein. This chain is Major pollen allergen Bet v 1-F/I (BETV1F), found in Betula pendula (European white birch).